The primary structure comprises 162 residues: ATP synthase subunit b', chloroplastic (162 aa).

A helical membrane pass occupies residues 26 to 46 (ATLPLQALQFILLTVLLTFIF).

It belongs to the ATPase B chain family. As to quaternary structure, F-type ATPases have 2 components, F(1) - the catalytic core - and F(0) - the membrane proton channel. F(1) has five subunits: alpha(3), beta(3), gamma(1), delta(1), epsilon(1). F(0) has four main subunits: a(1), b(1), b'(1) and c(10-14). The alpha and beta chains form an alternating ring which encloses part of the gamma chain. F(1) is attached to F(0) by a central stalk formed by the gamma and epsilon chains, while a peripheral stalk is formed by the delta, b and b' chains.

The protein localises to the plastid. It is found in the chloroplast thylakoid membrane. Functionally, f(1)F(0) ATP synthase produces ATP from ADP in the presence of a proton or sodium gradient. F-type ATPases consist of two structural domains, F(1) containing the extramembraneous catalytic core and F(0) containing the membrane proton channel, linked together by a central stalk and a peripheral stalk. During catalysis, ATP synthesis in the catalytic domain of F(1) is coupled via a rotary mechanism of the central stalk subunits to proton translocation. Component of the F(0) channel, it forms part of the peripheral stalk, linking F(1) to F(0). The b'-subunit is a diverged and duplicated form of b found in plants and photosynthetic bacteria. This Emiliania huxleyi (Coccolithophore) protein is ATP synthase subunit b', chloroplastic.